Here is a 999-residue protein sequence, read N- to C-terminus: Transcription-repair-coupling factor (999 aa).

One can recognise a Helicase ATP-binding domain in the interval 499 to 656; it reads DLSSHRVMDR…LSQIKGISSL (158 aa). Residue 512–519 coordinates ATP; it reads GDVGFGKT. The short motif at 609-612 is the DEEH box element; that stretch reads DEEH. Residues 677–833 enclose the Helicase C-terminal domain; that stretch reads LLKEIIYREL…SVAYHDLEIR (157 aa).

In the N-terminal section; belongs to the UvrB family. It in the C-terminal section; belongs to the helicase family. RecG subfamily.

It localises to the cytoplasm. Its function is as follows. Couples transcription and DNA repair by recognizing RNA polymerase (RNAP) stalled at DNA lesions. Mediates ATP-dependent release of RNAP and its truncated transcript from the DNA, and recruitment of nucleotide excision repair machinery to the damaged site. In Helicobacter pylori (strain ATCC 700392 / 26695) (Campylobacter pylori), this protein is Transcription-repair-coupling factor.